The following is a 515-amino-acid chain: MTDATVAKIPHVLVIMDGIGHREAIKDNAFLAAKTPSLSMMKQKHPHSLISGSGEDVGLPDGQMGNSEVGHMNLGAGRVLYQDFTRITKDIRDGVFFEHEVLVDAVEKAKAVHGAVHIMGLLSEGGVHSHEDHIVAMCELALKRGATVYLHAFLDGRDTPPKSAQPSLEKLDALFAQYPEQGRIVSMIGRYFAMDRDNRWDRVEQAYRLLTESEAVRTAQSAVQGLELAYAAGESDEFVKATRIGDAVAVQDGDSIVFMNFRADRARELTRAFVEHDFSGFTRQRIPHLSKFVMLTRYQATIDAPVAYMPEALHNSIGEYLSNLGKTQLRIAETEKYAHVTFFFSGGREDEYPGEKRILIPSPNVATYDLKPEMSAYEVTDQLVNAIDSGEFDLLVVNYANGDMVGHTGIFDAAVKAVEAVDTCLGRVYQAVMAKHGHMIITADHGNVEQMQDYQSGQVHTQHTTELVPFIYVGPTQAVIAEGGVLADVAPTLLNLMQLPVPAEMQGRNLITLSS.

Residues D17 and S67 each coordinate Mn(2+). Residue S67 is the Phosphoserine intermediate of the active site. Substrate is bound by residues H128, 157 to 158, R190, R196, 262 to 265, and K336; these read RD and RADR. Residues D403, H407, D444, H445, and H463 each coordinate Mn(2+).

This sequence belongs to the BPG-independent phosphoglycerate mutase family. In terms of assembly, monomer. The cofactor is Mn(2+).

It carries out the reaction (2R)-2-phosphoglycerate = (2R)-3-phosphoglycerate. It participates in carbohydrate degradation; glycolysis; pyruvate from D-glyceraldehyde 3-phosphate: step 3/5. Catalyzes the interconversion of 2-phosphoglycerate and 3-phosphoglycerate. The protein is 2,3-bisphosphoglycerate-independent phosphoglycerate mutase of Acinetobacter baylyi (strain ATCC 33305 / BD413 / ADP1).